The primary structure comprises 430 residues: Enolase (430 aa).

Position 167 (glutamine 167) interacts with (2R)-2-phosphoglycerate. Glutamate 209 (proton donor) is an active-site residue. Mg(2+) is bound by residues aspartate 246, glutamate 287, and aspartate 314. Lysine 339, arginine 368, serine 369, and lysine 390 together coordinate (2R)-2-phosphoglycerate. Catalysis depends on lysine 339, which acts as the Proton acceptor.

This sequence belongs to the enolase family. It depends on Mg(2+) as a cofactor.

It is found in the cytoplasm. The protein resides in the secreted. The protein localises to the cell surface. The enzyme catalyses (2R)-2-phosphoglycerate = phosphoenolpyruvate + H2O. It participates in carbohydrate degradation; glycolysis; pyruvate from D-glyceraldehyde 3-phosphate: step 4/5. Catalyzes the reversible conversion of 2-phosphoglycerate (2-PG) into phosphoenolpyruvate (PEP). It is essential for the degradation of carbohydrates via glycolysis. This is Enolase from Prochlorococcus marinus (strain MIT 9301).